A 122-amino-acid polypeptide reads, in one-letter code: MIQQQTYLNVADNSGARKLMCLRVLGTGNCRYGEIGDVIIAVVKDAIPNMPIKRSEIVRAVIVRTRQPVRRASGMSIRFDDNAAVIINNDGNPKGTRVFGPVARELRDKNYTKIVSLAPEVL.

It belongs to the universal ribosomal protein uL14 family. Part of the 50S ribosomal subunit. Forms a cluster with proteins L3 and L19. In the 70S ribosome, L14 and L19 interact and together make contacts with the 16S rRNA in bridges B5 and B8.

In terms of biological role, binds to 23S rRNA. Forms part of two intersubunit bridges in the 70S ribosome. The sequence is that of Large ribosomal subunit protein uL14 from Rippkaea orientalis (strain PCC 8801 / RF-1) (Cyanothece sp. (strain PCC 8801)).